The following is a 453-amino-acid chain: GTPase Der (453 aa).

EngA-type G domains lie at 4 to 169 (PIVA…SETP) and 177 to 352 (IKVA…RQFE). GTP-binding positions include 10 to 17 (GRPNVGKS), 57 to 61 (DTGGL), 120 to 123 (NKCE), 183 to 190 (GRPNVGKS), 230 to 234 (DTAGI), and 295 to 298 (NKWD). Residues 353-438 (QRVTTSVINE…PIRLLWRGKK (86 aa)) enclose the KH-like domain.

Belongs to the TRAFAC class TrmE-Era-EngA-EngB-Septin-like GTPase superfamily. EngA (Der) GTPase family. As to quaternary structure, associates with the 50S ribosomal subunit.

GTPase that plays an essential role in the late steps of ribosome biogenesis. In Acaryochloris marina (strain MBIC 11017), this protein is GTPase Der.